A 485-amino-acid chain; its full sequence is Glutamate mutase epsilon subunit (485 aa).

L-glutamate is bound at residue R100. Residue N123 participates in adenosylcob(III)alamin binding. L-glutamate contacts are provided by residues 149-150 (KH) and D171. Positions 180, 297, 326, and 330 each coordinate adenosylcob(III)alamin.

This sequence belongs to the methylaspartate mutase GlmE subunit family. As to quaternary structure, heterotetramer composed of 2 epsilon subunits (GlmE) and 2 sigma subunits (GlmS). GlmE exists as a homodimer and GlmS as a monomer. Adenosylcob(III)alamin serves as cofactor.

The catalysed reaction is (2S,3S)-3-methyl-L-aspartate = L-glutamate. Its pathway is amino-acid degradation; L-glutamate degradation via mesaconate pathway; acetate and pyruvate from L-glutamate: step 1/4. Catalyzes the carbon skeleton rearrangement of L-glutamate to L-threo-3-methylaspartate ((2S,3S)-3-methylaspartate). The sequence is that of Glutamate mutase epsilon subunit from Fusobacterium nucleatum subsp. nucleatum (strain ATCC 25586 / DSM 15643 / BCRC 10681 / CIP 101130 / JCM 8532 / KCTC 2640 / LMG 13131 / VPI 4355).